Reading from the N-terminus, the 274-residue chain is Large ribosomal subunit protein uL2 (274 aa).

The interval 223-265 (VVMNPVDHPHGGGEGRTSGGRHPVSPWGMPTKGFKTRKNKRTD) is disordered. Basic residues predominate over residues 256-265 (FKTRKNKRTD).

Belongs to the universal ribosomal protein uL2 family. As to quaternary structure, part of the 50S ribosomal subunit. Forms a bridge to the 30S subunit in the 70S ribosome.

Its function is as follows. One of the primary rRNA binding proteins. Required for association of the 30S and 50S subunits to form the 70S ribosome, for tRNA binding and peptide bond formation. It has been suggested to have peptidyltransferase activity; this is somewhat controversial. Makes several contacts with the 16S rRNA in the 70S ribosome. The chain is Large ribosomal subunit protein uL2 from Vibrio parahaemolyticus serotype O3:K6 (strain RIMD 2210633).